We begin with the raw amino-acid sequence, 596 residues long: Aspartate--tRNA(Asp/Asn) ligase (596 aa).

Residue glutamate 182 coordinates L-aspartate. Positions 206-209 (QLFK) are aspartate. L-aspartate is bound at residue arginine 228. ATP contacts are provided by residues 228 to 230 (RDE) and glutamine 237. Histidine 456 contacts L-aspartate. Glutamate 490 contributes to the ATP binding site. L-aspartate is bound at residue arginine 497. Residue 542 to 545 (GLDR) coordinates ATP.

Belongs to the class-II aminoacyl-tRNA synthetase family. Type 1 subfamily. Homodimer.

It localises to the cytoplasm. The enzyme catalyses tRNA(Asx) + L-aspartate + ATP = L-aspartyl-tRNA(Asx) + AMP + diphosphate. Aspartyl-tRNA synthetase with relaxed tRNA specificity since it is able to aspartylate not only its cognate tRNA(Asp) but also tRNA(Asn). Reaction proceeds in two steps: L-aspartate is first activated by ATP to form Asp-AMP and then transferred to the acceptor end of tRNA(Asp/Asn). This chain is Aspartate--tRNA(Asp/Asn) ligase, found in Syntrophotalea carbinolica (strain DSM 2380 / NBRC 103641 / GraBd1) (Pelobacter carbinolicus).